The sequence spans 200 residues: dTTP/UTP pyrophosphatase (200 aa).

Asp-72 serves as the catalytic Proton acceptor.

This sequence belongs to the Maf family. YhdE subfamily. Requires a divalent metal cation as cofactor.

The protein resides in the cytoplasm. The enzyme catalyses dTTP + H2O = dTMP + diphosphate + H(+). It catalyses the reaction UTP + H2O = UMP + diphosphate + H(+). Nucleoside triphosphate pyrophosphatase that hydrolyzes dTTP and UTP. May have a dual role in cell division arrest and in preventing the incorporation of modified nucleotides into cellular nucleic acids. This chain is dTTP/UTP pyrophosphatase, found in Pseudomonas syringae pv. syringae (strain B728a).